A 1580-amino-acid polypeptide reads, in one-letter code: Transcriptional activator GLI3 (1580 aa).

M1 is modified (N-acetylmethionine). Composition is skewed to polar residues over residues 1–10 (MEAQSHSSTT) and 58–78 (ITMQ…PSTS). Positions 1–79 (MEAQSHSSTT…KVSEEPSTSS (79 aa)) are disordered. R175 bears the Omega-N-methylarginine mark. The tract at residues 368 to 475 (QSLGSAFGHS…DKDESKQEPE (108 aa)) is disordered. The segment covering 401 to 427 (NPVQVSSGPSESSQNKPTSESAVSSTG) has biased composition (polar residues). Glycyl lysine isopeptide (Lys-Gly) (interchain with G-Cter in SUMO2) cross-links involve residues K438 and K462. The span at 461 to 474 (VKEEGDKDESKQEP) shows a compositional bias: basic and acidic residues. 5 consecutive C2H2-type zinc fingers follow at residues 480–505 (TNCH…NNDH), 513–540 (FVCR…MRRH), 546–570 (HKCT…LRSH), 576–601 (YVCE…NRTH), and 607–632 (YVCK…KTVH). The segment at 620-728 (DPSSLRKHVK…PISNYSNSGL (109 aa)) is disordered. The span at 632-648 (HGPEAHVTKKQRGDIHP) shows a compositional bias: basic and acidic residues. S664 is subject to Phosphoserine. Residues 684-699 (SKREECLQVKTVKAEK) show a composition bias toward basic and acidic residues. A compositionally biased stretch (low complexity) spans 703–726 (SQPSPGGQSSCSSQQSPISNYSNS). Residues 745–845 (DETPIMDSTI…VDVTMLNMLN (101 aa)) form a mediates interaction with DZIP1 region. A Glycyl lysine isopeptide (Lys-Gly) (interchain with G-Cter in ubiquitin) cross-link involves residue K773. A Glycyl lysine isopeptide (Lys-Gly) (interchain with G-Cter in SUMO2); alternate cross-link involves residue K779. K779 participates in a covalent cross-link: Glycyl lysine isopeptide (Lys-Gly) (interchain with G-Cter in ubiquitin); alternate. Glycyl lysine isopeptide (Lys-Gly) (interchain with G-Cter in ubiquitin) cross-links involve residues K784 and K800. 4 positions are modified to phosphoserine; by PKA: S849, S865, S877, and S907. A compositionally biased stretch (low complexity) spans 863-882 (RSSGISPCFSSRRSSEASQA). Residues 863–918 (RSSGISPCFSSRRSSEASQAEGRPQNVSVADSYDPISTDASRRSSEASQSDGLPSL) form a disordered region. Positions 908 to 918 (EASQSDGLPSL) are enriched in polar residues. 2 positions are modified to phosphoserine; by PKA: S980 and S1006. The disordered stretch occupies residues 981–1042 (DGGAHGYGRR…PAMATSAEKR (62 aa)).

This sequence belongs to the GLI C2H2-type zinc-finger protein family. In terms of assembly, the full-length GLI3 form (GLI3FL) interacts with SUFU and this interaction regulates the formation of either repressor or activator forms of GLI3. Its association with SUFU is regulated by Hh signaling and dissociation of the SUFU-GLI3 interaction requires the presence of the ciliary motor KIF3A. Interacts with KIF7. The activator form of GLI3 (GLI3A) but not the repressor form (GLI3R) can interact with TRPS1. The phosphorylated form interacts with BTRC. Interacts with ZIC1. Interacts with ZIC3 (via C2H2-type domains 3, 4 and 5); the interaction enhances its transcriptional activity. Interacts with WRD11; the interaction associates EMX1 with GLI3. Interacts with DZIP1; retains GLI3 within the cytoplasm. Phosphorylated on multiple sites by protein kinase A (PKA) and phosphorylation by PKA primes further phosphorylation by CK1 and GSK3. Phosphorylated by DYRK2 (in vitro). Phosphorylation is essential for its proteolytic processing. Post-translationally, transcriptional repressor GLI3R, a C-terminally truncated form, is generated from the full-length GLI3 protein (GLI3FL/GLI3-190) through proteolytic processing. This process requires PKA-primed phosphorylation of GLI3, ubiquitination of GLI3 and the presence of BTRC. GLI3FL is complexed with SUFU in the cytoplasm and is maintained in a neutral state. Without the Hh signal, the SUFU-GLI3 complex is recruited to cilia, leading to the efficient processing of GLI3FL into GLI3R. GLI3R formation leads to its dissociation from SUFU, allowing it to translocate into the nucleus, and repress Hh target genes. When Hh signaling is initiated, SUFU dissociates from GLI3FL and this has two consequences. First, GLI3R production is halted. Second, free GLI3FL translocates to the nucleus, where it is phosphorylated, destabilized, and converted to a transcriptional activator (GLI3A). Phosphorylated in vitro by ULK3. As to expression, is expressed in a wide variety of normal adult tissues, including lung, colon, spleen, placenta, testis, and myometrium.

Its subcellular location is the nucleus. It is found in the cytoplasm. The protein resides in the cell projection. The protein localises to the cilium. Functionally, has a dual function as a transcriptional activator and a repressor of the sonic hedgehog (Shh) pathway, and plays a role in limb development. The full-length GLI3 form (GLI3FL) after phosphorylation and nuclear translocation, acts as an activator (GLI3A) while GLI3R, its C-terminally truncated form, acts as a repressor. A proper balance between the GLI3 activator and the repressor GLI3R, rather than the repressor gradient itself or the activator/repressor ratio gradient, specifies limb digit number and identity. In concert with TRPS1, plays a role in regulating the size of the zone of distal chondrocytes, in restricting the zone of PTHLH expression in distal cells and in activating chondrocyte proliferation. Binds to the minimal GLI-consensus sequence 5'-GGGTGGTC-3'. This is Transcriptional activator GLI3 (GLI3) from Homo sapiens (Human).